The sequence spans 956 residues: MDLIAGESSKVLRKQGFRSLKLMSVDMEQELGNELEPFGADYGRLDNGLIYYVRRNSKPRMRAALALAVKVGSVLEEEDQRGVAHIVEHLAFSATTRYTNHDIVKFLESIGAEFGPCQNAMTTADETIYELFVPVDKPELLSQAISILAEFSSEIRVSKEDLEKERGAVMEEYRGNRNATGRMQDSHWQLMMEGSKYAERLPIGLEKVIRSVPAATVKQFYQKWYHLCNMAVVAVGDFPDTKTVVDLIKTHFEDKRSSSEPPQIPVFPVPSHEETRFSCFVESEAAGSAVMISYKMPVSDLKTVKDYRDMLAESMFLHALNQRLFKISRRKDPPFFACSVAADVLVARVRLHGFSEREISVVRALMMSEIESAYLERDQVQSTSLRDEYIQHFLHKEPVIGIEYEAQLQKTLLPQISASDVSRYSEKLRTSCGCVIKSMEPKSAATIDHMRNVVSKVNSLEEEKMIAPWDEENIPEEIVSEKPTPGDITHQLEYPEVGVTELTLSNGMQVCYKSTDFLDDQVLFTGFSYGGLSELPESDYISCSMGSTIAGEIGMFGYKPSVLMDMLADLETALQLVYQLFTTNVMPQEEEVGIVMQMAEESVRARERDPYTVFANRVKELNYGNSYFFRPIRISELRKVDPLKACEYFNSCFRDPSTFTVVIVGNLDPTIALPLILQYLGGIPKPPQPVLNFNRDDLKGLPFTFPTKITKEFVRSPMVEAQCSVQLCFPVQLTNGTMIEEIHCIGFLGKLLETKIIQFLRFEHGQIYSAEVSVFLGGNKPSRTADLRGDISVNFSCDPEISSKLVDLALEEIVRLQKEGPSQEDISAILEIEQRAHENGMQENYYWLDRIIRGYQSRVYAGDLGASCKILEEGRLRMRESLAPQTAQAALQRILPHPCKKQYTAVILMPQRSRFGFLSSIFSSRSEGPYIRDTKILAGIAGLGVVVFGIWRYSRK.

Residue M1 is modified to N-acetylmethionine. H85 contributes to the Zn(2+) binding site. E88 (proton acceptor) is an active-site residue. H89 is a Zn(2+) binding site. E165 is a catalytic residue. Zn(2+) is bound at residue E172.

The protein belongs to the peptidase M16 family. Zn(2+) is required as a cofactor.

This Arabidopsis thaliana (Mouse-ear cress) protein is Zinc protease PQQL-like.